The sequence spans 293 residues: ATP synthase gamma chain (293 aa).

This sequence belongs to the ATPase gamma chain family. In terms of assembly, F-type ATPases have 2 components, CF(1) - the catalytic core - and CF(0) - the membrane proton channel. CF(1) has five subunits: alpha(3), beta(3), gamma(1), delta(1), epsilon(1). CF(0) has three main subunits: a, b and c.

It is found in the cell membrane. Functionally, produces ATP from ADP in the presence of a proton gradient across the membrane. The gamma chain is believed to be important in regulating ATPase activity and the flow of protons through the CF(0) complex. This Streptococcus sanguinis protein is ATP synthase gamma chain.